The chain runs to 309 residues: THO complex subunit Tho3 (309 aa).

WD repeat units lie at residues 22–61 (GQQGPIRSLGWNLSGSRLASSSSSGSVLVWNSDRLDFKFT), 65–107 (GNRG…PIAE), 109–148 (ESNYENIYATWSPSGNYCCASSRDDMLSFIDARERRIMET), 192–231 (AHNSNCFCIEFSPDNRHLAIGGADAITSLWDPQELICERS), 234–273 (RMDYPIRTLSFSYDSRYLASGSEDRYVDIADTKTGDQIWK), and 275–309 (PTNGPLNKVAWHPTKHILAYAVSEPNSSGLKIFGL).

This sequence belongs to the THOC3 family. As to quaternary structure, component of the transcription/export (TREX) complex, which is at least is formed of SUB2, TEX1 and YRA1 and the THO complex composed of HPR1, MFT1, THO2 and THP1.

It localises to the nucleus. In terms of biological role, component of the TREX complex, which operates in coupling transcription elongation to mRNA export. This is THO complex subunit Tho3 (THO3) from Schizosaccharomyces pombe (strain 972 / ATCC 24843) (Fission yeast).